Reading from the N-terminus, the 1401-residue chain is DNA-directed RNA polymerase subunit beta' (1401 aa).

Zn(2+) contacts are provided by cysteine 71, cysteine 73, cysteine 86, and cysteine 89. The Mg(2+) site is built by aspartate 462, aspartate 464, and aspartate 466. Positions 810, 884, 891, and 894 each coordinate Zn(2+). The segment at 1377-1401 (RRKGTGAESATPMLADMANDPAAAE) is disordered.

Belongs to the RNA polymerase beta' chain family. The RNAP catalytic core consists of 2 alpha, 1 beta, 1 beta' and 1 omega subunit. When a sigma factor is associated with the core the holoenzyme is formed, which can initiate transcription. It depends on Mg(2+) as a cofactor. Zn(2+) is required as a cofactor.

The catalysed reaction is RNA(n) + a ribonucleoside 5'-triphosphate = RNA(n+1) + diphosphate. In terms of biological role, DNA-dependent RNA polymerase catalyzes the transcription of DNA into RNA using the four ribonucleoside triphosphates as substrates. This chain is DNA-directed RNA polymerase subunit beta', found in Rhizobium meliloti (strain 1021) (Ensifer meliloti).